Reading from the N-terminus, the 116-residue chain is Large ribosomal subunit protein bL17 (116 aa).

Belongs to the bacterial ribosomal protein bL17 family. As to quaternary structure, part of the 50S ribosomal subunit. Contacts protein L32.

This Rippkaea orientalis (strain PCC 8801 / RF-1) (Cyanothece sp. (strain PCC 8801)) protein is Large ribosomal subunit protein bL17.